Here is a 286-residue protein sequence, read N- to C-terminus: ATP synthase gamma chain (286 aa).

This sequence belongs to the ATPase gamma chain family. F-type ATPases have 2 components, CF(1) - the catalytic core - and CF(0) - the membrane proton channel. CF(1) has five subunits: alpha(3), beta(3), gamma(1), delta(1), epsilon(1). CF(0) has three main subunits: a, b and c.

Its subcellular location is the cell inner membrane. Functionally, produces ATP from ADP in the presence of a proton gradient across the membrane. The gamma chain is believed to be important in regulating ATPase activity and the flow of protons through the CF(0) complex. The protein is ATP synthase gamma chain of Alteromonas mediterranea (strain DSM 17117 / CIP 110805 / LMG 28347 / Deep ecotype).